A 379-amino-acid polypeptide reads, in one-letter code: Dual-specificity RNA methyltransferase RlmN (379 aa).

Glu95 acts as the Proton acceptor in catalysis. One can recognise a Radical SAM core domain in the interval 101–345 (EETRGTLCVS…TTVRKTRGDD (245 aa)). An intrachain disulfide couples Cys108 to Cys350. Positions 115, 119, and 122 each coordinate [4Fe-4S] cluster. Residues 176 to 177 (GE), Ser208, 230 to 232 (SLH), and Asn307 each bind S-adenosyl-L-methionine. The active-site S-methylcysteine intermediate is the Cys350.

This sequence belongs to the radical SAM superfamily. RlmN family. It depends on [4Fe-4S] cluster as a cofactor.

Its subcellular location is the cytoplasm. It catalyses the reaction adenosine(2503) in 23S rRNA + 2 reduced [2Fe-2S]-[ferredoxin] + 2 S-adenosyl-L-methionine = 2-methyladenosine(2503) in 23S rRNA + 5'-deoxyadenosine + L-methionine + 2 oxidized [2Fe-2S]-[ferredoxin] + S-adenosyl-L-homocysteine. It carries out the reaction adenosine(37) in tRNA + 2 reduced [2Fe-2S]-[ferredoxin] + 2 S-adenosyl-L-methionine = 2-methyladenosine(37) in tRNA + 5'-deoxyadenosine + L-methionine + 2 oxidized [2Fe-2S]-[ferredoxin] + S-adenosyl-L-homocysteine. In terms of biological role, specifically methylates position 2 of adenine 2503 in 23S rRNA and position 2 of adenine 37 in tRNAs. m2A2503 modification seems to play a crucial role in the proofreading step occurring at the peptidyl transferase center and thus would serve to optimize ribosomal fidelity. The chain is Dual-specificity RNA methyltransferase RlmN from Burkholderia cenocepacia (strain ATCC BAA-245 / DSM 16553 / LMG 16656 / NCTC 13227 / J2315 / CF5610) (Burkholderia cepacia (strain J2315)).